Consider the following 185-residue polypeptide: CASP-like protein 2C1 (185 aa).

Over 1 to 12 (MVAARVSEVKAE) the chain is Cytoplasmic. Residues 13 to 33 (GVLRGACAALAAAAALLVGLS) traverse the membrane as a helical segment. Topologically, residues 34–52 (TQTETVLLVRKKATVKDVQ) are extracellular. Residues 53 to 73 (ALWVLAMAAAAAAGYHLLQLL) form a helical membrane-spanning segment. Over 74–105 (KCFYLGRRVGGGASPCRRSSRALAWTCLLLDK) the chain is Cytoplasmic. The helical transmembrane segment at 106–126 (ACAYTTFATTVAAAQACVIAL) threads the bilayer. Residues 127-147 (DGAHALQWTKLCNIYTRFCEQ) are Extracellular-facing. The chain crosses the membrane as a helical span at residues 148-168 (IAGSLVLGMLAAVGTAVLSAA). The Cytoplasmic portion of the chain corresponds to 169–185 (SARNVFRHYSPGTYAAH).

This sequence belongs to the Casparian strip membrane proteins (CASP) family. In terms of assembly, homodimer and heterodimers.

The protein localises to the cell membrane. This chain is CASP-like protein 2C1, found in Sorghum bicolor (Sorghum).